The primary structure comprises 465 residues: GTPase Der (465 aa).

EngA-type G domains lie at 3–166 (FLVA…LNEY) and 184–358 (IHFS…ACAN). GTP contacts are provided by residues 9–16 (GRANVGKS), 56–60 (DTGGI), 118–121 (NKVD), 190–197 (GRPNVGKS), 237–241 (DTAGV), and 302–305 (NKWD). The KH-like domain occupies 359 to 443 (KKITTADATR…PIVFEFKQSE (85 aa)). The disordered stretch occupies residues 446 to 465 (FADRKNKRSKDEGSKSKKVK).

This sequence belongs to the TRAFAC class TrmE-Era-EngA-EngB-Septin-like GTPase superfamily. EngA (Der) GTPase family. In terms of assembly, associates with the 50S ribosomal subunit.

Its function is as follows. GTPase that plays an essential role in the late steps of ribosome biogenesis. This is GTPase Der from Francisella tularensis subsp. tularensis (strain WY96-3418).